We begin with the raw amino-acid sequence, 478 residues long: Protein nucleotidyltransferase YdiU (478 aa).

ATP contacts are provided by G84, G86, R87, K107, D119, G120, R170, and R177. D246 serves as the catalytic Proton acceptor. Residues N247 and D256 each contribute to the Mg(2+) site. D256 is a binding site for ATP.

It belongs to the SELO family. It depends on Mg(2+) as a cofactor. The cofactor is Mn(2+).

The enzyme catalyses L-seryl-[protein] + ATP = 3-O-(5'-adenylyl)-L-seryl-[protein] + diphosphate. The catalysed reaction is L-threonyl-[protein] + ATP = 3-O-(5'-adenylyl)-L-threonyl-[protein] + diphosphate. It catalyses the reaction L-tyrosyl-[protein] + ATP = O-(5'-adenylyl)-L-tyrosyl-[protein] + diphosphate. It carries out the reaction L-histidyl-[protein] + UTP = N(tele)-(5'-uridylyl)-L-histidyl-[protein] + diphosphate. The enzyme catalyses L-seryl-[protein] + UTP = O-(5'-uridylyl)-L-seryl-[protein] + diphosphate. The catalysed reaction is L-tyrosyl-[protein] + UTP = O-(5'-uridylyl)-L-tyrosyl-[protein] + diphosphate. Functionally, nucleotidyltransferase involved in the post-translational modification of proteins. It can catalyze the addition of adenosine monophosphate (AMP) or uridine monophosphate (UMP) to a protein, resulting in modifications known as AMPylation and UMPylation. This is Protein nucleotidyltransferase YdiU from Escherichia coli O6:K15:H31 (strain 536 / UPEC).